A 141-amino-acid polypeptide reads, in one-letter code: Large ribosomal subunit protein uL16 (141 aa).

The segment at 1–23 (MLMPKRTKYRKQMKGRNRGKAHR) is disordered.

This sequence belongs to the universal ribosomal protein uL16 family. In terms of assembly, part of the 50S ribosomal subunit.

Functionally, binds 23S rRNA and is also seen to make contacts with the A and possibly P site tRNAs. The protein is Large ribosomal subunit protein uL16 of Helicobacter pylori (strain J99 / ATCC 700824) (Campylobacter pylori J99).